A 220-amino-acid polypeptide reads, in one-letter code: Redox-sensing transcriptional repressor Rex (220 aa).

Residues 17–56 (LYARSLRYLLQEGVESVSSQELGDRINVTAAQIRKDLSYF) constitute a DNA-binding region (H-T-H motif). Residue 91 to 96 (GIGHLG) coordinates NAD(+).

It belongs to the transcriptional regulatory Rex family. In terms of assembly, homodimer.

Its subcellular location is the cytoplasm. In terms of biological role, modulates transcription in response to changes in cellular NADH/NAD(+) redox state. This chain is Redox-sensing transcriptional repressor Rex, found in Roseiflexus sp. (strain RS-1).